We begin with the raw amino-acid sequence, 123 residues long: Small ribosomal subunit protein uS12 (123 aa).

Aspartate 89 carries the 3-methylthioaspartic acid modification.

Belongs to the universal ribosomal protein uS12 family. In terms of assembly, part of the 30S ribosomal subunit. Contacts proteins S8 and S17. May interact with IF1 in the 30S initiation complex.

With S4 and S5 plays an important role in translational accuracy. Functionally, interacts with and stabilizes bases of the 16S rRNA that are involved in tRNA selection in the A site and with the mRNA backbone. Located at the interface of the 30S and 50S subunits, it traverses the body of the 30S subunit contacting proteins on the other side and probably holding the rRNA structure together. The combined cluster of proteins S8, S12 and S17 appears to hold together the shoulder and platform of the 30S subunit. In Afipia carboxidovorans (strain ATCC 49405 / DSM 1227 / KCTC 32145 / OM5) (Oligotropha carboxidovorans), this protein is Small ribosomal subunit protein uS12.